We begin with the raw amino-acid sequence, 1063 residues long: E3 ubiquitin-protein ligase PDZRN3 (1063 aa).

The segment at 18–56 (CALCHKVLEDPLTTPCGHVFCAGCVLPWVVQEGSCPARC) adopts an RING-type; degenerate zinc-finger fold. The TRAF-type zinc-finger motif lies at 100-158 (EHLERCDFAPARCRHAGCGQLLLRRDVEAHMRDACDARPVGRCQEGCGLPLTHGEQRAG). PDZ domains follow at residues 249 to 339 (TLVL…LRRT) and 419 to 503 (EVGL…IARP). S427 bears the Phosphoserine mark. Residues 545-602 (QKKHEEDGGTTDTATILSNQHEKDSGVGRTDESTRNDESSEQENNGEDATASANPLAG) are disordered. Positions 554–563 (TTDTATILSN) are enriched in polar residues. Residues 564 to 582 (QHEKDSGVGRTDESTRNDE) show a composition bias toward basic and acidic residues. Positions 680-705 (ESVDKELELLNEELRSIELECLSIVR) form a coiled coil. Residues 746–755 (ELPEKSDKDS) are compositionally biased toward basic and acidic residues. 2 disordered regions span residues 746–798 (ELPE…IEAY) and 834–853 (IKER…PKLG). A compositionally biased stretch (polar residues) spans 756-770 (SSAYNTGESCRSTPL).

As to quaternary structure, interacts with NLGN1 and EFNB2. Interacts with UBE2D2 and with MUSK via the first PDZ domain. In myotubes, the interaction between PDZRN3 and MUSK is enhanced upon agrin stimulation. Post-translationally, auto-ubiquitinated. Highly expressed in skeletal and cardiac muscle and at lower levels in spinal cord and brain (at protein level). Also expressed in kidney and lung. In muscles, concentrated at the neuromuscular junction (NMJ).

The protein localises to the synapse. The protein resides in the cytoplasm. It carries out the reaction S-ubiquitinyl-[E2 ubiquitin-conjugating enzyme]-L-cysteine + [acceptor protein]-L-lysine = [E2 ubiquitin-conjugating enzyme]-L-cysteine + N(6)-ubiquitinyl-[acceptor protein]-L-lysine.. It participates in protein modification; protein ubiquitination. Functionally, E3 ubiquitin-protein ligase. Plays an important role in regulating the surface level of MUSK on myotubes. Mediates the ubiquitination of MUSK, promoting its endocytosis and lysosomal degradation. Might contribute to terminal myogenic differentiation. In Mus musculus (Mouse), this protein is E3 ubiquitin-protein ligase PDZRN3 (Pdzrn3).